Reading from the N-terminus, the 511-residue chain is ATP synthase subunit alpha (511 aa).

Residue 169–176 (GDRQTGKT) coordinates ATP.

Belongs to the ATPase alpha/beta chains family. In terms of assembly, F-type ATPases have 2 components, CF(1) - the catalytic core - and CF(0) - the membrane proton channel. CF(1) has five subunits: alpha(3), beta(3), gamma(1), delta(1), epsilon(1). CF(0) has three main subunits: a(1), b(2) and c(9-12). The alpha and beta chains form an alternating ring which encloses part of the gamma chain. CF(1) is attached to CF(0) by a central stalk formed by the gamma and epsilon chains, while a peripheral stalk is formed by the delta and b chains.

The protein localises to the cell inner membrane. It carries out the reaction ATP + H2O + 4 H(+)(in) = ADP + phosphate + 5 H(+)(out). Produces ATP from ADP in the presence of a proton gradient across the membrane. The alpha chain is a regulatory subunit. The protein is ATP synthase subunit alpha of Janthinobacterium sp. (strain Marseille) (Minibacterium massiliensis).